Consider the following 330-residue polypeptide: Small ribosomal subunit protein mS35 (330 aa).

A disordered region spans residues 50-73 (AAGKGVRGQMKPRRQAGEPRTERM). Basic and acidic residues predominate over residues 64–73 (QAGEPRTERM).

The protein belongs to the mitochondrion-specific ribosomal protein mS35 family. In terms of assembly, component of the mitochondrial ribosome small subunit (28S) which comprises a 12S rRNA and about 30 distinct proteins.

It is found in the mitochondrion. The protein is Small ribosomal subunit protein mS35 (mrps35) of Danio rerio (Zebrafish).